We begin with the raw amino-acid sequence, 893 residues long: POU domain protein 2, isoform B (893 aa).

The interval 586 to 668 is disordered; sequence QMKQQQREDP…STPKPTSGLT (83 aa). The segment covering 602-617 has biased composition (low complexity); the sequence is PLAKSPLRSPSLSPVP. A compositionally biased stretch (polar residues) spans 623–646; it reads QQRTPPNSMTANSLGMSSAVMTPN. The span at 647–665 shows a compositional bias: low complexity; it reads TPSMQQQPQLQQSTPKPTS. The POU-specific domain occupies 681 to 755; that stretch reads EETTDLEELE…LLQKWLEDAD (75 aa). Positions 786–845 form a DNA-binding region, homeobox; it reads RRKKRTSIETTVRTTLEKAFLMNCKPTSEEISQLSERLNMDKEVIRVWFCNRRQKEKRIN.

Belongs to the POU transcription factor family. Class-2 subfamily. Initial expression in cellular blastoderm stage, then in ectodermal stripes during germband extension. Broad expression in the neuroectoderm followed by limitation to discrete subsets of CNS cells, and expression in specific PNS neurons and support cells.

The protein resides in the nucleus. Its function is as follows. DNA-binding regulatory protein implicated in early development. Involved in neuronal cell fate decision. May act as an octamer-dependent activator of transcription. Could also play an early role in specific ectodermal cells, and a subsequent role in the embryonic nervous system. The polypeptide is POU domain protein 2, isoform B (Drosophila melanogaster (Fruit fly)).